Reading from the N-terminus, the 101-residue chain is Small ribosomal subunit protein bS18c (101 aa).

Belongs to the bacterial ribosomal protein bS18 family. Part of the 30S ribosomal subunit.

The protein resides in the plastid. It localises to the chloroplast. In Coffea arabica (Arabian coffee), this protein is Small ribosomal subunit protein bS18c.